The sequence spans 487 residues: MPN domain-containing protein (487 aa).

The disordered stretch occupies residues 1 to 55; the sequence is MAAPESLSPGATAEEAPEEDEDDAEAEDPERGTGSGGRSGSLGGSGGGTAGPGMA. N-acetylalanine is present on alanine 2. Serine 8 bears the Phosphoserine mark. The span at 15–28 shows a compositional bias: acidic residues; it reads EAPEEDEDDAEAED. A compositionally biased stretch (gly residues) spans 33–55; sequence TGSGGRSGSLGGSGGGTAGPGMA. The 96-residue stretch at 61-156 folds into the RAMA domain; that stretch reads TRRAVTLRVL…KYKAAWLRRH (96 aa). Residues serine 113, serine 115, and tryptophan 135 each contribute to the DNA site. Residues 163-217 form a disordered region; the sequence is ATADESPTSEGEEEELLLEEEEEDVLAGVSSEDKGHRPPGKGSLEPEATPPGKRM. Serine 168 and serine 171 each carry phosphoserine. A compositionally biased stretch (acidic residues) spans 172–187; it reads EGEEEELLLEEEEEDV. The region spanning 258–393 is the MPN domain; that stretch reads VAVSSNVLFL…PESKICPFWV (136 aa). Zn(2+) contacts are provided by histidine 335, histidine 337, and aspartate 348. Positions 335-348 match the JAMM motif motif; sequence HSHPHSPAVPSLQD.

The protein belongs to the peptidase M67 family. Monomer. Mainly monomoric, but when binds to dsDNA, forms homotetramer assembled into two homodimers. May interact with histones; this interaction is facilitated by. In terms of processing, degraded following binding to N(6)-methyladenosine methylated DNA (m6A).

Functionally, probable protease. Acts as a sensor of N(6)-methyladenosine methylation on DNA (m6A): recognizes and binds m6A DNA, leading to its degradation. Binds only double strand DNA (dsDNA) in a sequence-independent manner. The chain is MPN domain-containing protein from Mus musculus (Mouse).